We begin with the raw amino-acid sequence, 112 residues long: uncharacterized protein (112 aa).

This is an uncharacterized protein from Bacillus subtilis (strain 168).